We begin with the raw amino-acid sequence, 175 residues long: Protein LHCP TRANSLOCATION DEFECT (175 aa).

The transit peptide at M1 to D68 directs the protein to the chloroplast. Residues P117–A149 form an ANK repeat.

As to quaternary structure, interacts with CAO/cpSRP43, but is not a component of the transit complex. Interacts with LHCP (via T14 domain), TIC40 and TIC110. In terms of tissue distribution, highly expressed in leaves and seedlings. Detected in roots, but not in germinating seeds.

The protein localises to the plastid. The protein resides in the chloroplast thylakoid membrane. It is found in the chloroplast envelope. Its subcellular location is the chloroplast stroma. Its function is as follows. Involved in the import of light-harvesting complex proteins (LHCP) and subsequent routing of these proteins to the chloroplast signal recognition particle (SRP) pathway. The sequence is that of Protein LHCP TRANSLOCATION DEFECT (LTD) from Arabidopsis thaliana (Mouse-ear cress).